We begin with the raw amino-acid sequence, 161 residues long: E3 ubiquitin ligase complex SCF subunit sconC (161 aa).

The interaction with the F-box domain of F-box proteins stretch occupies residues 103–161 (ILAANYLDIKGLLDVGCKTVANMIKGKSPEEIRKTFNIQNDFTPEEEDQIRRENEWAEE).

Belongs to the SKP1 family. In terms of assembly, component of the SCF (SKP1-CUL1-F-box protein) E3 ubiquitin ligase complexes.

It participates in protein modification; protein ubiquitination. In terms of biological role, essential component of the SCF (SKP1-CUL1-F-box protein) E3 ubiquitin ligase complexes, which mediate the ubiquitination and subsequent proteasomal degradation of target proteins. Controls sulfur metabolite repression, probably by mediating the inactivation or degradation of the metR transcription factor. The chain is E3 ubiquitin ligase complex SCF subunit sconC (sconC) from Aspergillus terreus (strain NIH 2624 / FGSC A1156).